A 77-amino-acid polypeptide reads, in one-letter code: uncharacterized protein (77 aa).

2 helical membrane-spanning segments follow: residues 3 to 23 (FNFI…SFLF) and 35 to 55 (IGAI…VALL).

The protein resides in the cell membrane. This is an uncharacterized protein from Haemophilus influenzae (strain ATCC 51907 / DSM 11121 / KW20 / Rd).